Reading from the N-terminus, the 300-residue chain is Cation-efflux pump FieF (300 aa).

A run of 4 helical transmembrane segments spans residues 12–32 (AALS…FAWW), 40–60 (LAAL…LFVV), 82–102 (AALA…LTGF), and 114–134 (PSIG…LVTF). Residues Asp45 and Asp49 each coordinate Zn(2+). Residues His153 and Asp157 each coordinate Zn(2+). Transmembrane regions (helical) follow at residues 155-175 (QSDV…WYGF) and 178-198 (ADAL…LRMG).

Belongs to the cation diffusion facilitator (CDF) transporter (TC 2.A.4) family. FieF subfamily. In terms of assembly, homodimer.

The protein localises to the cell inner membrane. The catalysed reaction is Zn(2+)(in) + H(+)(out) = Zn(2+)(out) + H(+)(in). The enzyme catalyses Cd(2+)(in) + H(+)(out) = Cd(2+)(out) + H(+)(in). It catalyses the reaction Fe(2+)(in) + H(+)(out) = Fe(2+)(out) + H(+)(in). In terms of biological role, divalent metal cation transporter which exports Zn(2+), Cd(2+) and possibly Fe(2+). May be involved in zinc and iron detoxification by efflux. The protein is Cation-efflux pump FieF of Yersinia pestis bv. Antiqua (strain Antiqua).